Consider the following 65-residue polypeptide: DNA-directed RNA polymerase subunit Rpo10 (65 aa).

Cys7, Cys10, Cys44, and Cys45 together coordinate Zn(2+).

The protein belongs to the archaeal Rpo10/eukaryotic RPB10 RNA polymerase subunit family. In terms of assembly, part of the RNA polymerase complex. Zn(2+) serves as cofactor.

It is found in the cytoplasm. The catalysed reaction is RNA(n) + a ribonucleoside 5'-triphosphate = RNA(n+1) + diphosphate. Functionally, DNA-dependent RNA polymerase (RNAP) catalyzes the transcription of DNA into RNA using the four ribonucleoside triphosphates as substrates. This is DNA-directed RNA polymerase subunit Rpo10 from Pyrobaculum arsenaticum (strain DSM 13514 / JCM 11321 / PZ6).